We begin with the raw amino-acid sequence, 193 residues long: V-type sodium ATPase subunit E (193 aa).

It belongs to the V-ATPase E subunit family. Post-translationally, the N-terminus is blocked.

Its function is as follows. Involved in ATP-driven sodium extrusion. This Enterococcus hirae (strain ATCC 9790 / DSM 20160 / JCM 8729 / LMG 6399 / NBRC 3181 / NCIMB 6459 / NCDO 1258 / NCTC 12367 / WDCM 00089 / R) protein is V-type sodium ATPase subunit E (ntpE).